We begin with the raw amino-acid sequence, 368 residues long: DNA-dependent metalloprotease dvc-1 (368 aa).

The 170-residue stretch at 21 to 190 (HALFIQFDAR…QSCGGNFLKV (170 aa)) folds into the SprT-like domain. His89 is a Zn(2+) binding site. Glu90 is a catalytic residue. Zn(2+) contacts are provided by His93 and His108. A disordered region spans residues 187 to 309 (FLKVKEPEGY…PVNFTSPSSA (123 aa)). Basic and acidic residues predominate over residues 226–237 (TLDDFFKKDGKN). A compositionally biased stretch (low complexity) spans 238-274 (SSDNSTSKSPTKPSTSLFTGSGQKLGGSSSTSSLLNS). A UBZ4-type zinc finger spans residues 344–368 (SVICPSCNTEVMENLIHGHLDYCLG). Residues Cys347, Cys350, His362, and Cys366 each coordinate Zn(2+).

Belongs to the Spartan family. Interacts with vcp/p97 (cdc-48.1 or cdc-48.2).

It is found in the nucleus. It localises to the chromosome. In terms of biological role, DNA-dependent metalloendopeptidase that mediates the proteolytic cleavage of covalent DNA-protein cross-links (DPCs) during DNA synthesis, thereby playing a key role in maintaining genomic integrity. DPCs are highly toxic DNA lesions that interfere with essential chromatin transactions, such as replication and transcription, and which are induced by reactive agents, such as UV light or formaldehyde. Associates with the DNA replication machinery and specifically removes DPCs during DNA synthesis. Regulator of UV-induced DNA damage response: required to protect genome stability during DNA replication, possibly via recruitment of vcp/p97 (cdc-48.1 or cdc-48.2) recruitment. The polypeptide is DNA-dependent metalloprotease dvc-1 (Caenorhabditis elegans).